We begin with the raw amino-acid sequence, 382 residues long: Intermediate transcription factor 3 large subunit (382 aa).

This sequence belongs to the orthopoxvirus OPG150 family. In terms of assembly, heterodimerizes with protein A8 to form the virus intermediate transcription factor (VITF)-3.

Its function is as follows. Acts with RNA polymerase to initiate transcription from intermediate gene promoters. This is Intermediate transcription factor 3 large subunit (OPG150) from Bos taurus (Bovine).